The chain runs to 88 residues: UPF0250 protein PM1928 (88 aa).

It belongs to the UPF0250 family.

The polypeptide is UPF0250 protein PM1928 (Pasteurella multocida (strain Pm70)).